The chain runs to 363 residues: Aminomethyltransferase (363 aa).

It belongs to the GcvT family. As to quaternary structure, the glycine cleavage system is composed of four proteins: P, T, L and H.

It carries out the reaction N(6)-[(R)-S(8)-aminomethyldihydrolipoyl]-L-lysyl-[protein] + (6S)-5,6,7,8-tetrahydrofolate = N(6)-[(R)-dihydrolipoyl]-L-lysyl-[protein] + (6R)-5,10-methylene-5,6,7,8-tetrahydrofolate + NH4(+). Its function is as follows. The glycine cleavage system catalyzes the degradation of glycine. The polypeptide is Aminomethyltransferase (Staphylococcus aureus (strain N315)).